We begin with the raw amino-acid sequence, 409 residues long: N-acetylglucosamine-6-phosphate deacetylase (409 aa).

Residue E143 coordinates a divalent metal cation. 154-155 contributes to the substrate binding site; that stretch reads AH. Positions 211 and 232 each coordinate a divalent metal cation. Substrate is bound by residues 235-236, R243, and 269-272; these read NA and DGTH. The active-site Proton donor/acceptor is D294. 328–330 serves as a coordination point for substrate; the sequence is LSG.

The protein belongs to the metallo-dependent hydrolases superfamily. NagA family. A divalent metal cation serves as cofactor.

The enzyme catalyses N-acetyl-D-glucosamine 6-phosphate + H2O = D-glucosamine 6-phosphate + acetate. It participates in amino-sugar metabolism; N-acetylneuraminate degradation. Functionally, hydrolyzes the N-glycolyl group from N-glycolylglucosamine 6-phosphate (GlcNGc-6-P) in the N-glycolylneuraminic acid (Neu5Gc) degradation pathway. Although human is not able to catalyze formation of Neu5Gc due to the inactive CMAHP enzyme, Neu5Gc is present in food and must be degraded. The sequence is that of N-acetylglucosamine-6-phosphate deacetylase (AMDHD2) from Homo sapiens (Human).